A 205-amino-acid chain; its full sequence is Thiamine-phosphate synthase (205 aa).

4-amino-2-methyl-5-(diphosphooxymethyl)pyrimidine-binding positions include 34-38 (QLRCK) and asparagine 66. Residues aspartate 67 and aspartate 86 each contribute to the Mg(2+) site. A 4-amino-2-methyl-5-(diphosphooxymethyl)pyrimidine-binding site is contributed by serine 105. 131-133 (TTT) contributes to the 2-[(2R,5Z)-2-carboxy-4-methylthiazol-5(2H)-ylidene]ethyl phosphate binding site. Lysine 134 contacts 4-amino-2-methyl-5-(diphosphooxymethyl)pyrimidine. Glycine 163 contributes to the 2-[(2R,5Z)-2-carboxy-4-methylthiazol-5(2H)-ylidene]ethyl phosphate binding site.

This sequence belongs to the thiamine-phosphate synthase family. Mg(2+) is required as a cofactor.

The catalysed reaction is 2-[(2R,5Z)-2-carboxy-4-methylthiazol-5(2H)-ylidene]ethyl phosphate + 4-amino-2-methyl-5-(diphosphooxymethyl)pyrimidine + 2 H(+) = thiamine phosphate + CO2 + diphosphate. The enzyme catalyses 2-(2-carboxy-4-methylthiazol-5-yl)ethyl phosphate + 4-amino-2-methyl-5-(diphosphooxymethyl)pyrimidine + 2 H(+) = thiamine phosphate + CO2 + diphosphate. It catalyses the reaction 4-methyl-5-(2-phosphooxyethyl)-thiazole + 4-amino-2-methyl-5-(diphosphooxymethyl)pyrimidine + H(+) = thiamine phosphate + diphosphate. It participates in cofactor biosynthesis; thiamine diphosphate biosynthesis; thiamine phosphate from 4-amino-2-methyl-5-diphosphomethylpyrimidine and 4-methyl-5-(2-phosphoethyl)-thiazole: step 1/1. Condenses 4-methyl-5-(beta-hydroxyethyl)thiazole monophosphate (THZ-P) and 2-methyl-4-amino-5-hydroxymethyl pyrimidine pyrophosphate (HMP-PP) to form thiamine monophosphate (TMP). The polypeptide is Thiamine-phosphate synthase (Neisseria gonorrhoeae (strain ATCC 700825 / FA 1090)).